The chain runs to 527 residues: Berberine bridge enzyme-like 10 (527 aa).

A signal peptide spans 1 to 20; sequence MEKLLVISLLLLISTSVTTS. The cysteines at positions 32 and 95 are disulfide-linked. A glycan (N-linked (GlcNAc...) asparagine) is linked at asparagine 53. The 176-residue stretch at 73–248 folds into the FAD-binding PCMH-type domain; the sequence is TTPKPISVVA…LGYKIQLVPV (176 aa). Histidine 110 is subject to Pros-8alpha-FAD histidine. N-linked (GlcNAc...) asparagine glycans are attached at residues asparagine 137 and asparagine 293.

It belongs to the oxygen-dependent FAD-linked oxidoreductase family. Requires FAD as cofactor.

The protein localises to the secreted. It localises to the cell wall. The chain is Berberine bridge enzyme-like 10 from Arabidopsis thaliana (Mouse-ear cress).